The chain runs to 594 residues: (E)-beta-ocimene synthase TPS6FN (594 aa).

5 residues coordinate (2E)-geranyl diphosphate: R303, D340, D344, R489, and N492. 2 residues coordinate Mg(2+): D340 and D344. Positions 340 to 344 (DDIYD) match the DDXXD motif motif. Mg(2+)-binding residues include N492, T496, and E500.

Belongs to the terpene synthase family. Tpsb subfamily. It depends on Mg(2+) as a cofactor. The cofactor is Mn(2+). As to expression, expressed in glandular trichomes two to four weeks after flowering onset.

It carries out the reaction (2E)-geranyl diphosphate = (E)-beta-ocimene + diphosphate. It catalyses the reaction (2E)-geranyl diphosphate = (Z)-beta-ocimene + diphosphate. It participates in secondary metabolite biosynthesis; terpenoid biosynthesis. Functionally, involved in monoterpene (C10) olefins biosynthesis, constituants of cannabinoids and terpenoids-rich resins. Catalyzes mainly the conversion of (2E)-geranyl diphosphate to (E)-beta-ocimene, and also produces minor products such as (Z)-beta-ocimene. In Cannabis sativa (Hemp), this protein is (E)-beta-ocimene synthase TPS6FN.